The primary structure comprises 74 residues: Protein SMIM7 homolog (74 aa).

The helical transmembrane segment at 53 to 73 (FRAFIGLWNIFIMFLMLVFFG) threads the bilayer.

Belongs to the SMIM7 family.

Its subcellular location is the membrane. The sequence is that of Protein SMIM7 homolog from Ixodes scapularis (Black-legged tick).